Reading from the N-terminus, the 860-residue chain is Leucine--tRNA ligase (860 aa).

The 'HIGH' region motif lies at 42–52; the sequence is PYPSGRLHMGH. The 'KMSKS' region motif lies at 619–623; it reads KMSKS. Lys622 is a binding site for ATP.

This sequence belongs to the class-I aminoacyl-tRNA synthetase family.

It is found in the cytoplasm. It catalyses the reaction tRNA(Leu) + L-leucine + ATP = L-leucyl-tRNA(Leu) + AMP + diphosphate. This Pectobacterium atrosepticum (strain SCRI 1043 / ATCC BAA-672) (Erwinia carotovora subsp. atroseptica) protein is Leucine--tRNA ligase.